The primary structure comprises 442 residues: Mirror-image polydactyly gene 1 protein (442 aa).

The tract at residues 1–39 (MENWSKDITHSYLEQETTGINKSTQPDEQLTMNSEKSMH) is disordered. Residues 12–35 (YLEQETTGINKSTQPDEQLTMNSE) show a composition bias toward polar residues. Coiled-coil stretches lie at residues 107-212 (SDKE…LENI) and 253-435 (ECKM…KVGT).

Expressed very weakly in heart, liver, skeletal muscle, kidney, pancreas and fetal kidney. Not detected in brain, placenta and lung.

The polypeptide is Mirror-image polydactyly gene 1 protein (MIPOL1) (Homo sapiens (Human)).